Consider the following 481-residue polypeptide: Probable glycine dehydrogenase (decarboxylating) subunit 2 (481 aa).

The tract at residues 1 to 26 (MVIFEKTRGKNSPSVMPSKKGDVSNI) is disordered. At Lys263 the chain carries N6-(pyridoxal phosphate)lysine.

This sequence belongs to the GcvP family. C-terminal subunit subfamily. The glycine cleavage system is composed of four proteins: P, T, L and H. In this organism, the P 'protein' is a heterodimer of two subunits. Requires pyridoxal 5'-phosphate as cofactor.

It carries out the reaction N(6)-[(R)-lipoyl]-L-lysyl-[glycine-cleavage complex H protein] + glycine + H(+) = N(6)-[(R)-S(8)-aminomethyldihydrolipoyl]-L-lysyl-[glycine-cleavage complex H protein] + CO2. Functionally, the glycine cleavage system catalyzes the degradation of glycine. The P protein binds the alpha-amino group of glycine through its pyridoxal phosphate cofactor; CO(2) is released and the remaining methylamine moiety is then transferred to the lipoamide cofactor of the H protein. In Francisella tularensis subsp. mediasiatica (strain FSC147), this protein is Probable glycine dehydrogenase (decarboxylating) subunit 2.